Here is a 273-residue protein sequence, read N- to C-terminus: Undecaprenyl-diphosphatase (273 aa).

A run of 6 helical transmembrane segments spans residues 46-63 (LFEVVIQSGAILAVCWEY), 83-103 (FVLNLIIAFLPAGIVGFLAGK), 109-129 (LFNSTTVTTTFILGGLIILWV), 184-204 (ATEFSFFLAIPTLFIATAYDL), 218-238 (AFGIGFAAAFVSAFLAVRGLL), and 249-269 (FAWYRIAFGLVVLSTAHYGLV).

The protein belongs to the UppP family.

The protein localises to the cell inner membrane. The catalysed reaction is di-trans,octa-cis-undecaprenyl diphosphate + H2O = di-trans,octa-cis-undecaprenyl phosphate + phosphate + H(+). Its function is as follows. Catalyzes the dephosphorylation of undecaprenyl diphosphate (UPP). Confers resistance to bacitracin. This chain is Undecaprenyl-diphosphatase, found in Methylococcus capsulatus (strain ATCC 33009 / NCIMB 11132 / Bath).